The following is a 211-amino-acid chain: Thymidylate kinase (211 aa).

7-14 lines the ATP pocket; that stretch reads GCEGSGKS.

It belongs to the thymidylate kinase family.

The enzyme catalyses dTMP + ATP = dTDP + ADP. In terms of biological role, phosphorylation of dTMP to form dTDP in both de novo and salvage pathways of dTTP synthesis. This chain is Thymidylate kinase, found in Chlamydia abortus (strain DSM 27085 / S26/3) (Chlamydophila abortus).